The following is a 557-amino-acid chain: Formate--tetrahydrofolate ligase (557 aa).

65-72 (TPAGEGKT) provides a ligand contact to ATP.

This sequence belongs to the formate--tetrahydrofolate ligase family.

The catalysed reaction is (6S)-5,6,7,8-tetrahydrofolate + formate + ATP = (6R)-10-formyltetrahydrofolate + ADP + phosphate. The protein operates within one-carbon metabolism; tetrahydrofolate interconversion. The protein is Formate--tetrahydrofolate ligase of Methylobacterium radiotolerans (strain ATCC 27329 / DSM 1819 / JCM 2831 / NBRC 15690 / NCIMB 10815 / 0-1).